The primary structure comprises 960 residues: Leucine-rich repeat receptor-like serine/threonine-protein kinase SKM1 (960 aa).

A signal peptide spans M1–A29. Residues N30–W634 are Extracellular-facing. A disulfide bond links C61 and C68. N70, N83, N103, N108, N129, and N134 each carry an N-linked (GlcNAc...) asparagine glycan. 22 LRR repeats span residues I71–L96, P97–T120, S122–N146, T149–F168, S169–R194, E196–M216, K217–L240, S241–L264, K265–L288, N290–M312, Q313–L336, R338–H360, N361–S384, H386–C408, Q409–L432, L434–M454, P455–S477, K478–F501, E503–C525, K526–F549, Q550–I573, and S575–A598. The N-linked (GlcNAc...) asparagine glycan is linked to N191. The short motif at W221 to Y226 is the CLE45 peptide binding element. N228 and N252 each carry an N-linked (GlcNAc...) asparagine glycan. N324 carries N-linked (GlcNAc...) asparagine glycosylation. Residues N362 and N372 are each glycosylated (N-linked (GlcNAc...) asparagine). N537 carries an N-linked (GlcNAc...) asparagine glycan. N-linked (GlcNAc...) asparagine glycosylation is found at N580 and N600. Residues L635–V655 form a helical membrane-spanning segment. Residues L656 to A960 are Cytoplasmic-facing. Residues F691–L953 enclose the Protein kinase domain. A Phosphothreonine modification is found at T692. ATP is bound by residues L697–V705 and K717. Y834 carries the phosphotyrosine modification.

Belongs to the protein kinase superfamily. Ser/Thr protein kinase family. In terms of assembly, self-interacts. Binds to CLE45 present in the pistil, particularly under relatively high temperature (at 30 degrees Celsius). As to expression, expressed in pollen grains and roots vascular tissues. Present in roots.

The protein resides in the cell membrane. It carries out the reaction L-seryl-[protein] + ATP = O-phospho-L-seryl-[protein] + ADP + H(+). The enzyme catalyses L-threonyl-[protein] + ATP = O-phospho-L-threonyl-[protein] + ADP + H(+). Its function is as follows. Receptor with a serine/threonine-protein kinase activity. Together with SKM2, LRR-rich receptor-like kinase (LRR-RLK) required for male fertility by the perception of CLE43 and CLE45 peptides and the transduction of their promoting action in pollen tubes, especially under relatively high temperature (at 30 degrees Celsius), thus conferring tolerance against high temperature probably through the maintenance of mitochondrial activity. Seems to not be involved in the perception of CLE45 peptide in roots. The chain is Leucine-rich repeat receptor-like serine/threonine-protein kinase SKM1 from Arabidopsis thaliana (Mouse-ear cress).